Consider the following 493-residue polypeptide: Probable cytosol aminopeptidase (493 aa).

K262 and D267 together coordinate Mn(2+). K274 is an active-site residue. Residues D285, D344, and E346 each contribute to the Mn(2+) site. R348 is an active-site residue.

It belongs to the peptidase M17 family. Mn(2+) is required as a cofactor.

The protein localises to the cytoplasm. It catalyses the reaction Release of an N-terminal amino acid, Xaa-|-Yaa-, in which Xaa is preferably Leu, but may be other amino acids including Pro although not Arg or Lys, and Yaa may be Pro. Amino acid amides and methyl esters are also readily hydrolyzed, but rates on arylamides are exceedingly low.. The enzyme catalyses Release of an N-terminal amino acid, preferentially leucine, but not glutamic or aspartic acids.. Functionally, presumably involved in the processing and regular turnover of intracellular proteins. Catalyzes the removal of unsubstituted N-terminal amino acids from various peptides. This chain is Probable cytosol aminopeptidase, found in Xanthomonas campestris pv. campestris (strain 8004).